The sequence spans 86 residues: Insulin (86 aa).

Disulfide bonds link Cys-7–Cys-72, Cys-19–Cys-85, and Cys-71–Cys-76. Residues 33 to 63 constitute a propeptide, c peptide; the sequence is ELEDPQVGQADPGVVPEAGRLQPLALEMTLQ.

Belongs to the insulin family. Heterodimer of a B chain and an A chain linked by two disulfide bonds.

The protein resides in the secreted. Functionally, insulin decreases blood glucose concentration. It increases cell permeability to monosaccharides, amino acids and fatty acids. It accelerates glycolysis, the pentose phosphate cycle, and glycogen synthesis in liver. In Chinchilla chinchilla (Short-tailed chinchilla), this protein is Insulin (INS).